Consider the following 971-residue polypeptide: Exportin-2 (971 aa).

Residues 29-102 (AEKFLESVEG…KANIVNLMLT (74 aa)) form the Importin N-terminal domain.

Belongs to the XPO2/CSE1 family. In terms of assembly, interacts with cftr. Detected in larval gut, liver, exocrine pancreas and part of the brain and retina at 96 hpf.

It is found in the cytoplasm. It localises to the nucleus. The protein resides in the apical cell membrane. Its subcellular location is the basal cell membrane. The protein localises to the lateral cell membrane. Functionally, export receptor for importin alpha. Mediates importin-alpha re-export from the nucleus to the cytoplasm after import substrates have been released into the nucleoplasm. Negatively regulates fluid secretion and plays a role in fluid homeostasis by down-regulating cftr activity. This is Exportin-2 (cse1l) from Danio rerio (Zebrafish).